The primary structure comprises 450 residues: ATP-dependent protease ATPase subunit HslU (450 aa).

ATP-binding positions include valine 29, 71-76 (GVGKTE), aspartate 261, glutamate 328, and arginine 400.

This sequence belongs to the ClpX chaperone family. HslU subfamily. As to quaternary structure, a double ring-shaped homohexamer of HslV is capped on each side by a ring-shaped HslU homohexamer. The assembly of the HslU/HslV complex is dependent on binding of ATP.

The protein resides in the cytoplasm. ATPase subunit of a proteasome-like degradation complex; this subunit has chaperone activity. The binding of ATP and its subsequent hydrolysis by HslU are essential for unfolding of protein substrates subsequently hydrolyzed by HslV. HslU recognizes the N-terminal part of its protein substrates and unfolds these before they are guided to HslV for hydrolysis. In Rickettsia peacockii (strain Rustic), this protein is ATP-dependent protease ATPase subunit HslU.